The sequence spans 471 residues: MCGIFGIYSYERLNVAKKIYYGLFALQHRGQEGAGIATSDGKNIHYYKNIGLVTDVFKNETLQNLFGYIGIGHVRYSTTGGKAVENCQPFVVKSSFGNIAIAHNGDLVNSDELRRELEMKGHIFTSSTDSEVIAQLLVRELLKTSDKIEAIKNTLKKLVGAYSLLIMFNDSLIAVRDPWGFKPLCIGRDESNIYISSEDCALTTLDAEFVKDIEPGEIIEIKDGEIISHKLDYGVSEYNPVNVDVPCIYRGAATCMFEYVYFARPDSTIDGISVYKVRKRIGKILAKEHPVDADVVSPIPDSGVTFALGFSEESGIPYYEGLIKNRYVGRTFILPSQNERELAVRLKLSPVKSVLEGKRVVLVDDSIVRGTTSRRIVNMVRKAGAKEVHLRIGCPKIISPCYYGIDMATKKELIASNKTEEEIGKAIGVDSIGYLSLEGLVKAIGRKDLCLACVTGKYPTEVNFEKILGRE.

Cys2 acts as the Nucleophile in catalysis. The 223-residue stretch at Cys2–Gly224 folds into the Glutamine amidotransferase type-2 domain. Cys255 is a binding site for [4Fe-4S] cluster. Residues Ser302, Asp364, and Asp365 each contribute to the Mg(2+) site. Residues Cys401, Cys450, and Cys453 each coordinate [4Fe-4S] cluster.

In the C-terminal section; belongs to the purine/pyrimidine phosphoribosyltransferase family. It depends on Mg(2+) as a cofactor. [4Fe-4S] cluster is required as a cofactor.

It carries out the reaction 5-phospho-beta-D-ribosylamine + L-glutamate + diphosphate = 5-phospho-alpha-D-ribose 1-diphosphate + L-glutamine + H2O. It participates in purine metabolism; IMP biosynthesis via de novo pathway; N(1)-(5-phospho-D-ribosyl)glycinamide from 5-phospho-alpha-D-ribose 1-diphosphate: step 1/2. In terms of biological role, catalyzes the formation of phosphoribosylamine from phosphoribosylpyrophosphate (PRPP) and glutamine. This chain is Amidophosphoribosyltransferase, found in Methanocaldococcus jannaschii (strain ATCC 43067 / DSM 2661 / JAL-1 / JCM 10045 / NBRC 100440) (Methanococcus jannaschii).